We begin with the raw amino-acid sequence, 506 residues long: Proline--tRNA ligase (506 aa).

It belongs to the class-II aminoacyl-tRNA synthetase family. ProS type 3 subfamily. In terms of assembly, homodimer.

It is found in the cytoplasm. The enzyme catalyses tRNA(Pro) + L-proline + ATP = L-prolyl-tRNA(Pro) + AMP + diphosphate. Catalyzes the attachment of proline to tRNA(Pro) in a two-step reaction: proline is first activated by ATP to form Pro-AMP and then transferred to the acceptor end of tRNA(Pro). The sequence is that of Proline--tRNA ligase from Rhodopirellula baltica (strain DSM 10527 / NCIMB 13988 / SH1).